A 214-amino-acid chain; its full sequence is MSTLHKVKAYFGMAPMDDYEDEYYEDDDRGARAGGYSRRPREDRFEEEAYGYEGHEYDEGPAYRGGYAERFADEPRFEGRMRAPREFDRPAPARLGAMRGSTRGALAMDPRGMAELFEAGSPLAKITTLRPKDYSEARTIGERFRDGTPVIMDLVSMDNADAKRLVDFAAGLAFALRGSFDKVATKVFLLSPADVDVTAEERRRIAEAGFYSYR.

Positions 25 to 51 (EDDDRGARAGGYSRRPREDRFEEEAYG) are disordered.

The protein belongs to the SepF family. Homodimer. Interacts with FtsZ.

The protein resides in the cytoplasm. Functionally, cell division protein that is part of the divisome complex and is recruited early to the Z-ring. Probably stimulates Z-ring formation, perhaps through the cross-linking of FtsZ protofilaments. Its function overlaps with FtsA. In Mycolicibacterium smegmatis (strain ATCC 700084 / mc(2)155) (Mycobacterium smegmatis), this protein is Cell division protein SepF.